We begin with the raw amino-acid sequence, 282 residues long: 1,4-dihydroxy-6-naphtoate synthase (282 aa).

Substrate-binding positions include 57–59 (KVS) and 109–110 (TA). Residue His153 is the Proton acceptor of the active site.

It belongs to the MqnA/MqnD family. MqnD subfamily.

It catalyses the reaction cyclic dehypoxanthinylfutalosinate = 1,4-dihydroxy-6-naphthoate + dihydroxyacetone. It functions in the pathway quinol/quinone metabolism; menaquinone biosynthesis. In terms of biological role, catalyzes the conversion of cyclic dehypoxanthine futalosine (cyclic DHFL) into 1,4-dihydroxy-6-naphthoate, a step in the biosynthesis of menaquinone (MK, vitamin K2). The chain is 1,4-dihydroxy-6-naphtoate synthase from Streptomyces coelicolor (strain ATCC BAA-471 / A3(2) / M145).